The primary structure comprises 362 residues: Peptide chain release factor 1 (362 aa).

Gln237 is modified (N5-methylglutamine).

The protein belongs to the prokaryotic/mitochondrial release factor family. Methylated by PrmC. Methylation increases the termination efficiency of RF1.

Its subcellular location is the cytoplasm. Peptide chain release factor 1 directs the termination of translation in response to the peptide chain termination codons UAG and UAA. In Aliivibrio salmonicida (strain LFI1238) (Vibrio salmonicida (strain LFI1238)), this protein is Peptide chain release factor 1.